We begin with the raw amino-acid sequence, 93 residues long: MSITPAKKSELISEYKVKDGDTGSAYVQCAILSERIRNLTEHLKVHKKDFHCRRGLMVLVCKRRKGLQYVRNKYGNDAYLDLVKRLGIRDVFH.

It belongs to the universal ribosomal protein uS15 family. Part of the 30S ribosomal subunit. Forms a bridge to the 50S subunit in the 70S ribosome, contacting the 23S rRNA.

In terms of biological role, one of the primary rRNA binding proteins, it binds directly to 16S rRNA where it helps nucleate assembly of the platform of the 30S subunit by binding and bridging several RNA helices of the 16S rRNA. Functionally, forms an intersubunit bridge (bridge B4) with the 23S rRNA of the 50S subunit in the ribosome. This is Small ribosomal subunit protein uS15 from Anaplasma marginale (strain Florida).